A 392-amino-acid polypeptide reads, in one-letter code: Elongation factor Tu-3 (392 aa).

Residues 10–206 (KPHLNIGTMG…AVDTYVPMPE (197 aa)) form the tr-type G domain. The segment at 19-26 (GHVDHGKT) is G1. GTP is bound at residue 19–26 (GHVDHGKT). A Mg(2+)-binding site is contributed by T26. Positions 63–67 (GITIN) are G2. The G3 stretch occupies residues 84-87 (DMPG). GTP contacts are provided by residues 84–88 (DMPGH) and 139–142 (NKAD). The tract at residues 139–142 (NKAD) is G4. The tract at residues 176–178 (SGL) is G5.

Belongs to the TRAFAC class translation factor GTPase superfamily. Classic translation factor GTPase family. EF-Tu/EF-1A subfamily. In terms of assembly, monomer.

Its subcellular location is the cytoplasm. It carries out the reaction GTP + H2O = GDP + phosphate + H(+). Its function is as follows. GTP hydrolase that promotes the GTP-dependent binding of aminoacyl-tRNA to the A-site of ribosomes during protein biosynthesis. The protein is Elongation factor Tu-3 of Streptomyces coelicolor (strain ATCC BAA-471 / A3(2) / M145).